The following is a 121-amino-acid chain: MPRVKRGVTARARHKKITDAATGYRGRRKNVFRIAKQAVMRAGQYAYRDRRNKKRVFRALWIARINAAVRQHDMTYSVFMNGMKKAAIELDRKVLSDMAIADKAAFAALVTRIKSVVNAAA.

Belongs to the bacterial ribosomal protein bL20 family.

Binds directly to 23S ribosomal RNA and is necessary for the in vitro assembly process of the 50S ribosomal subunit. It is not involved in the protein synthesizing functions of that subunit. The polypeptide is Large ribosomal subunit protein bL20 (Polynucleobacter asymbioticus (strain DSM 18221 / CIP 109841 / QLW-P1DMWA-1) (Polynucleobacter necessarius subsp. asymbioticus)).